Here is a 348-residue protein sequence, read N- to C-terminus: Centromere protein L (348 aa).

This sequence belongs to the CENP-L/IML3 family.

It localises to the nucleus. Its subcellular location is the chromosome. The protein localises to the centromere. In terms of biological role, probable component of a centromeric complex involved in assembly of kinetochore proteins, mitotic progression and chromosome segregation. The protein is Centromere protein L (cenpl) of Xenopus tropicalis (Western clawed frog).